We begin with the raw amino-acid sequence, 142 residues long: MAKKVEAYIKLQVAAGMANPSPPVGPALGQHGVNIMEFCKAFNAKTESIEKGLPIPVVISVYNDRSFTFVTKTPPAAVLLKKAAGVKSGSGRPNTEKVGTVTDAQLQEIAETKAADMTGADIEAMKRSIAGTARSMGLVVEG.

This sequence belongs to the universal ribosomal protein uL11 family. In terms of assembly, part of the ribosomal stalk of the 50S ribosomal subunit. Interacts with L10 and the large rRNA to form the base of the stalk. L10 forms an elongated spine to which L12 dimers bind in a sequential fashion forming a multimeric L10(L12)X complex. One or more lysine residues are methylated.

In terms of biological role, forms part of the ribosomal stalk which helps the ribosome interact with GTP-bound translation factors. This is Large ribosomal subunit protein uL11 from Aliivibrio fischeri (strain MJ11) (Vibrio fischeri).